Consider the following 168-residue polypeptide: Large ribosomal subunit protein bL9 (168 aa).

Residues 148–168 form a disordered region; that stretch reads ENGEGSVQPAAEAAEVASTEA. Low complexity predominate over residues 157–168; it reads AAEAAEVASTEA.

It belongs to the bacterial ribosomal protein bL9 family.

Binds to the 23S rRNA. The polypeptide is Large ribosomal subunit protein bL9 (Herpetosiphon aurantiacus (strain ATCC 23779 / DSM 785 / 114-95)).